A 429-amino-acid chain; its full sequence is Serine--tRNA ligase (429 aa).

Residue 236 to 238 (TAE) participates in L-serine binding. 267 to 269 (RSE) is a binding site for ATP. E290 provides a ligand contact to L-serine. Residue 354–357 (EISS) participates in ATP binding. S390 is an L-serine binding site.

It belongs to the class-II aminoacyl-tRNA synthetase family. Type-1 seryl-tRNA synthetase subfamily. Homodimer. The tRNA molecule binds across the dimer.

It localises to the cytoplasm. The enzyme catalyses tRNA(Ser) + L-serine + ATP = L-seryl-tRNA(Ser) + AMP + diphosphate + H(+). The catalysed reaction is tRNA(Sec) + L-serine + ATP = L-seryl-tRNA(Sec) + AMP + diphosphate + H(+). Its pathway is aminoacyl-tRNA biosynthesis; selenocysteinyl-tRNA(Sec) biosynthesis; L-seryl-tRNA(Sec) from L-serine and tRNA(Sec): step 1/1. Catalyzes the attachment of serine to tRNA(Ser). Is also able to aminoacylate tRNA(Sec) with serine, to form the misacylated tRNA L-seryl-tRNA(Sec), which will be further converted into selenocysteinyl-tRNA(Sec). This Photorhabdus laumondii subsp. laumondii (strain DSM 15139 / CIP 105565 / TT01) (Photorhabdus luminescens subsp. laumondii) protein is Serine--tRNA ligase.